The following is a 42-amino-acid chain: Photosystem I reaction center subunit IX (42 aa).

The chain crosses the membrane as a helical span at residues 7–27 (YLSTAPVLATLWFGFLAGLLI).

Belongs to the PsaJ family.

The protein resides in the plastid. The protein localises to the chloroplast thylakoid membrane. Functionally, may help in the organization of the PsaE and PsaF subunits. This is Photosystem I reaction center subunit IX from Psilotum nudum (Whisk fern).